The sequence spans 223 residues: Ribonuclease 3 (223 aa).

Positions 4–127 (LENLQKLLGY…VMGAVYLEAG (124 aa)) constitute an RNase III domain. Glu-40 provides a ligand contact to Mg(2+). Asp-44 is an active-site residue. Asp-113 and Glu-116 together coordinate Mg(2+). The active site involves Glu-116. The region spanning 154 to 223 (DYKTALQEIT…AKIALEKMKK (70 aa)) is the DRBM domain.

Belongs to the ribonuclease III family. Homodimer. Requires Mg(2+) as cofactor.

The protein resides in the cytoplasm. The catalysed reaction is Endonucleolytic cleavage to 5'-phosphomonoester.. Its function is as follows. Digests double-stranded RNA. Involved in the processing of primary rRNA transcript to yield the immediate precursors to the large and small rRNAs (23S and 16S). Processes some mRNAs, and tRNAs when they are encoded in the rRNA operon. Processes pre-crRNA and tracrRNA of type II CRISPR loci if present in the organism. The polypeptide is Ribonuclease 3 (Campylobacter curvus (strain 525.92)).